We begin with the raw amino-acid sequence, 325 residues long: Small ribosomal subunit protein uS2 (325 aa).

The segment covering K212–A226 has biased composition (basic and acidic residues). The disordered stretch occupies residues K212–W325. Low complexity-rich tracts occupy residues Q234–D247 and P261–G289. Polar residues predominate over residues F290–T300.

Belongs to the universal ribosomal protein uS2 family. Component of the small ribosomal subunit. Mature ribosomes consist of a small (40S) and a large (60S) subunit. The 40S subunit contains about 33 different proteins and 1 molecule of RNA (18S). The 60S subunit contains about 49 different proteins and 3 molecules of RNA (28S, 5.8S and 5S). Interacts with ribosomal protein S21.

It is found in the cytoplasm. Required for the assembly and/or stability of the 40S ribosomal subunit. Required for the processing of the 20S rRNA-precursor to mature 18S rRNA in a late step of the maturation of 40S ribosomal subunits. The chain is Small ribosomal subunit protein uS2 from Suberites domuncula (Sponge).